Reading from the N-terminus, the 362-residue chain is Phosphoserine aminotransferase (362 aa).

Ser-9 and Arg-42 together coordinate L-glutamate. Residues 76–77 (GR), Trp-102, Thr-153, Asp-174, and Gln-197 each bind pyridoxal 5'-phosphate. Lys-198 is subject to N6-(pyridoxal phosphate)lysine. 239–240 (NT) is a binding site for pyridoxal 5'-phosphate.

The protein belongs to the class-V pyridoxal-phosphate-dependent aminotransferase family. SerC subfamily. In terms of assembly, homodimer. The cofactor is pyridoxal 5'-phosphate.

The protein localises to the cytoplasm. It carries out the reaction O-phospho-L-serine + 2-oxoglutarate = 3-phosphooxypyruvate + L-glutamate. It catalyses the reaction 4-(phosphooxy)-L-threonine + 2-oxoglutarate = (R)-3-hydroxy-2-oxo-4-phosphooxybutanoate + L-glutamate. Its pathway is amino-acid biosynthesis; L-serine biosynthesis; L-serine from 3-phospho-D-glycerate: step 2/3. It participates in cofactor biosynthesis; pyridoxine 5'-phosphate biosynthesis; pyridoxine 5'-phosphate from D-erythrose 4-phosphate: step 3/5. Its function is as follows. Catalyzes the reversible conversion of 3-phosphohydroxypyruvate to phosphoserine and of 3-hydroxy-2-oxo-4-phosphonooxybutanoate to phosphohydroxythreonine. This Escherichia fergusonii (strain ATCC 35469 / DSM 13698 / CCUG 18766 / IAM 14443 / JCM 21226 / LMG 7866 / NBRC 102419 / NCTC 12128 / CDC 0568-73) protein is Phosphoserine aminotransferase.